Reading from the N-terminus, the 296-residue chain is MPEGKIIKALSGFYYVLDESQDKIIQCRGRGIFRKNKITPLVGDYAVYQAENDKEGYLLEIKERTNELIRPPISNVDQAVLVFSAVQPAFSTSLLDRFLVLVEANGIHPIICITKMDLAADGESKEAILSYVKDYQAIGYDVYVTSSKENSGLTGIVKHFENKTTVFAGQSGVGKSSLLNAISPELELKTNEISTHLGRGKHTTRHVELIHTSGGLVADTPGFSSLEFTGIEEEELGSTFPEIREISASCKFRGCLHLKEPKCAVKQAVEEGEIQPYRYEHYKEFMQEIKERKPRY.

A CP-type G domain is found at 65–226 (TNELIRPPIS…VADTPGFSSL (162 aa)). GTP-binding positions include 114-117 (TKMD) and 169-177 (GQSGVGKSS). Zn(2+)-binding residues include C250, C255, H257, and C263.

It belongs to the TRAFAC class YlqF/YawG GTPase family. RsgA subfamily. Monomer. Associates with 30S ribosomal subunit, binds 16S rRNA. It depends on Zn(2+) as a cofactor.

It localises to the cytoplasm. One of several proteins that assist in the late maturation steps of the functional core of the 30S ribosomal subunit. Helps release RbfA from mature subunits. May play a role in the assembly of ribosomal proteins into the subunit. Circularly permuted GTPase that catalyzes slow GTP hydrolysis, GTPase activity is stimulated by the 30S ribosomal subunit. The protein is Small ribosomal subunit biogenesis GTPase RsgA of Bacillus velezensis (strain DSM 23117 / BGSC 10A6 / LMG 26770 / FZB42) (Bacillus amyloliquefaciens subsp. plantarum).